The following is a 526-amino-acid chain: Beta,beta-carotene 15,15'-dioxygenase (526 aa).

Fe cation is bound by residues His-172, His-236, His-307, and His-512.

This sequence belongs to the carotenoid oxygenase family. Fe(2+) serves as cofactor.

It is found in the cytoplasm. The protein localises to the cytosol. It carries out the reaction all-trans-beta-carotene + O2 = 2 all-trans-retinal. Its pathway is cofactor metabolism; retinol metabolism. Symmetrically cleaves beta-carotene into two molecules of retinal using a dioxygenase mechanism. This Gallus gallus (Chicken) protein is Beta,beta-carotene 15,15'-dioxygenase.